The primary structure comprises 35 residues: Cupiennin-2b (35 aa).

The residue at position 35 (Gln35) is a Glutamine amide.

Expressed by the venom gland.

It localises to the secreted. The protein is Cupiennin-2b of Cupiennius salei (American wandering spider).